The sequence spans 318 residues: L-malyl-CoA/beta-methylmalyl-CoA lyase (318 aa).

Phe19, Arg24, Lys30, and Arg76 together coordinate substrate. Mg(2+) contacts are provided by Glu141 and Asp168. Substrate is bound by residues 167-168 and 251-252; these read AD and IH.

The protein belongs to the HpcH/HpaI aldolase family. In terms of assembly, homohexamer. Dimer of trimers. Mg(2+) is required as a cofactor. The cofactor is Mn(2+).

The catalysed reaction is (S)-malyl-CoA = glyoxylate + acetyl-CoA. It catalyses the reaction (2R,3S)-beta-methylmalyl-CoA = propanoyl-CoA + glyoxylate. In terms of biological role, involved in the ethylmalonyl-CoA pathway for acetate assimilation. Catalyzes the reversible condensation of glyoxylate and acetyl-CoA to L-malyl-CoA and the reversible condensation of glyoxylate and propionyl-CoA to yield beta-methylmalyl-CoA. This is L-malyl-CoA/beta-methylmalyl-CoA lyase from Cereibacter sphaeroides (strain ATCC 17029 / ATH 2.4.9) (Rhodobacter sphaeroides).